The chain runs to 169 residues: NADH-quinone oxidoreductase subunit I (169 aa).

2 consecutive 4Fe-4S ferredoxin-type domains span residues 61–90 and 100–129; these read RKYKNGEERCIACKLCEAICPAQAITIEAQ and VRYDIDMTKCIYCGFCQEACPVDAIVEGPN. [4Fe-4S] cluster-binding residues include Cys-70, Cys-73, Cys-76, Cys-80, Cys-109, Cys-112, Cys-115, and Cys-119.

Belongs to the complex I 23 kDa subunit family. As to quaternary structure, NDH-1 is composed of 14 different subunits. Subunits NuoA, H, J, K, L, M, N constitute the membrane sector of the complex. [4Fe-4S] cluster is required as a cofactor.

The protein resides in the cell inner membrane. It catalyses the reaction a quinone + NADH + 5 H(+)(in) = a quinol + NAD(+) + 4 H(+)(out). NDH-1 shuttles electrons from NADH, via FMN and iron-sulfur (Fe-S) centers, to quinones in the respiratory chain. The immediate electron acceptor for the enzyme in this species is believed to be ubiquinone. Couples the redox reaction to proton translocation (for every two electrons transferred, four hydrogen ions are translocated across the cytoplasmic membrane), and thus conserves the redox energy in a proton gradient. In Ehrlichia chaffeensis (strain ATCC CRL-10679 / Arkansas), this protein is NADH-quinone oxidoreductase subunit I.